The primary structure comprises 315 residues: Cross-pathway control WD-repeat protein 2 (315 aa).

WD repeat units follow at residues 14–54 (GHKG…DSYG), 62–101 (GHNH…TTRR), 104–144 (GHTS…YDIK), 147–188 (CHTE…LKTN), 191–230 (GHTG…HLYS), 232–270 (EAGD…IVDE), and 282–315 (GRQP…TVTS).

It belongs to the WD repeat G protein beta family. Ribosomal protein RACK1 subfamily.

In terms of biological role, component of the ribosome, a large ribonucleoprotein complex responsible for the synthesis of proteins in the cell. The small ribosomal subunit (SSU) binds messenger RNAs (mRNAs) and translates the encoded message by selecting cognate aminoacyl-transfer RNA (tRNA) molecules. The large subunit (LSU) contains the ribosomal catalytic site termed the peptidyl transferase center (PTC), which catalyzes the formation of peptide bonds, thereby polymerizing the amino acids delivered by tRNAs into a polypeptide chain. The nascent polypeptides leave the ribosome through a tunnel in the LSU and interact with protein factors that function in enzymatic processing, targeting, and the membrane insertion of nascent chains at the exit of the ribosomal tunnel. Plays in important role in the regulation of vegetative growth and fruiting body development. Especially, positively regulates the expression of genes involved in fruiting body development such as FVFD30 and FVFD16, as well as genes encoding for lectins and hydrophobins. Also regulates the expression of genes involved in cAMP signaling pathway. The chain is Cross-pathway control WD-repeat protein 2 from Flammulina velutipes (Agaricus velutipes).